A 218-amino-acid chain; its full sequence is Putative receptor like protein 25 (218 aa).

The Extracellular segment spans residues 1–178; that stretch reads MIYTKNAYGS…QEDAKVLNWK (178 aa). LRR repeat units lie at residues 34 to 58, 59 to 82, 83 to 106, and 108 to 131; these read LTLY…IGLL, KALI…MANL, IELE…LKTL, and FLGY…QITG. Asn-65 is a glycosylation site (N-linked (GlcNAc...) asparagine). Asn-113 is a glycosylation site (N-linked (GlcNAc...) asparagine). Residues 179 to 199 form a helical membrane-spanning segment; that stretch reads AVATGYGPGVFFGLAIAQIIA. The Cytoplasmic portion of the chain corresponds to 200-218; sequence SYKPEWLVKIIGPNKRRNH.

It belongs to the RLP family.

Its subcellular location is the cell membrane. The protein is Putative receptor like protein 25 of Arabidopsis thaliana (Mouse-ear cress).